A 66-amino-acid chain; its full sequence is Large ribosomal subunit protein bL35 (66 aa).

Residues 1–16 (MPKQKTHRASAKRFKR) show a composition bias toward basic residues. Positions 1–21 (MPKQKTHRASAKRFKRTGNGG) are disordered.

Belongs to the bacterial ribosomal protein bL35 family.

The sequence is that of Large ribosomal subunit protein bL35 from Lactococcus lactis subsp. cremoris (strain MG1363).